The following is an 83-amino-acid chain: UPF0248 protein PH1212.1 (83 aa).

It belongs to the UPF0248 family.

This is UPF0248 protein PH1212.1 from Pyrococcus horikoshii (strain ATCC 700860 / DSM 12428 / JCM 9974 / NBRC 100139 / OT-3).